The following is a 573-amino-acid chain: Lauric acid 10-hydroxylase (573 aa).

Helical transmembrane passes span 3–23 (YVNI…LMSL) and 298–318 (LFPT…LLIF). C516 lines the heme pocket.

The protein belongs to the cytochrome P450 family. Heme serves as cofactor. As to expression, mostly expressed in flowers and leaves and, at low levels, in roots and stems.

It is found in the endoplasmic reticulum membrane. The catalysed reaction is an omega-methyl-medium-chain fatty acid + reduced [NADPH--hemoprotein reductase] + O2 = an omega-hydroxy-medium-chain fatty acid + oxidized [NADPH--hemoprotein reductase] + H2O + H(+). The enzyme catalyses decanoate + reduced [NADPH--hemoprotein reductase] + O2 = 10-hydroxydecanoate + oxidized [NADPH--hemoprotein reductase] + H2O + H(+). It carries out the reaction dodecanoate + reduced [NADPH--hemoprotein reductase] + O2 = 12-hydroxydodecanoate + oxidized [NADPH--hemoprotein reductase] + H2O + H(+). It participates in lipid metabolism; fatty acid metabolism. Its function is as follows. Cytochrome P450 hydroxylase catalyzing the conversion of decanoate (capric acid) and dodecanoate (lauric acid) to their corresponding omega-hydroxy metabolites, 10-hydroxydecanoate and 12-hydroxydodecanoate, respectively; these hydroxylated components affect plant growth, including reducing root elongation. The protein is Lauric acid 10-hydroxylase of Petunia hybrida (Petunia).